The following is a 218-amino-acid chain: Thyroid hormone receptor alpha (218 aa).

In terms of domain architecture, NR LBD spans 1-215 (PEDIGQSPGV…PPLFLEVFED (215 aa)). Residues R36 and S85 each contribute to the 3,3',5-triiodo-L-thyronine site.

Belongs to the nuclear hormone receptor family. NR1 subfamily.

Its subcellular location is the nucleus. In terms of biological role, nuclear hormone receptor that can act as a repressor or activator of transcription. High affinity receptor for thyroid hormones, including triiodothyronine and thyroxine. The protein is Thyroid hormone receptor alpha (thra) of Oncorhynchus mykiss (Rainbow trout).